The chain runs to 94 residues: Large ribosomal subunit protein bL27 (94 aa).

The propeptide occupies Met-1–Phe-9. The interval Lys-12–Lys-32 is disordered. The span at Asn-20–Lys-32 shows a compositional bias: basic and acidic residues.

This sequence belongs to the bacterial ribosomal protein bL27 family. The N-terminus is cleaved by ribosomal processing cysteine protease Prp.

In Staphylococcus carnosus (strain TM300), this protein is Large ribosomal subunit protein bL27.